The following is a 100-amino-acid chain: Elastin (100 aa).

2 positions are modified to 4-hydroxyproline: Pro-72 and Pro-86. A disulfide bridge connects residues Cys-90 and Cys-95.

The protein belongs to the elastin family. The polymeric elastin chains are cross-linked together into an extensible 3D network. Forms a ternary complex with BGN and MFAP2. Interacts with MFAP2 via divalent cations (calcium &gt; magnesium &gt; manganese) in a dose-dependent and saturating manner. Interacts with FBLN5 and FBN1. Forms a ternary complex with FBN1 and FBLN2 or FBLN5. Interacts with MFAP4 in a Ca (2+)-dependent manner; this interaction promotes ELN self-assembly. Interacts with EFEMP2 with moderate affinity. Post-translationally, elastin is formed through the cross-linking of its soluble precursor tropoelastin. Cross-linking is initiated through the action of lysyl oxidase on exposed lysines to form allysine. Subsequent spontaneous condensation reactions with other allysine or unmodified lysine residues result in various bi-, tri-, and tetrafunctional cross-links. The most abundant cross-links in mature elastin fibers are lysinonorleucine, allysine aldol, desmosine, and isodesmosine. In terms of processing, hydroxylation on proline residues within the sequence motif, GXPG, is most likely to be 4-hydroxy as this fits the requirement for 4-hydroxylation in vertebrates.

It is found in the secreted. It localises to the extracellular space. Its subcellular location is the extracellular matrix. In terms of biological role, major structural protein of tissues such as aorta and nuchal ligament, which must expand rapidly and recover completely. Molecular determinant of the late arterial morphogenesis, stabilizing arterial structure by regulating proliferation and organization of vascular smooth muscle. This Ovis aries (Sheep) protein is Elastin (ELN).